The sequence spans 186 residues: TATA box-binding protein-like 1 (186 aa).

It belongs to the TBP family. Expressed ubiquitously with highest expression in the ovary and testis.

It localises to the cytoplasm. The protein resides in the nucleus. In terms of biological role, part of a specialized transcription system that mediates the transcription of most ribosomal proteins through the 5'-TCT-3' motif which is a core promoter element at these genes. Seems to also mediate the transcription of NF1. Does not bind the TATA box. Members of the TBP family are differentially required to regulate transcription and development during early embryogenesis. Particularly regulates genes that have a role in catabolism. The sequence is that of TATA box-binding protein-like 1 (tbpl1) from Xenopus laevis (African clawed frog).